Here is a 200-residue protein sequence, read N- to C-terminus: Glycerol-3-phosphate acyltransferase (200 aa).

Helical transmembrane passes span 3-23 (YIYSIFIGYFFGAIPFSFFIA), 50-70 (FYGALAFFFDIFKAYIAVFLV), 75-95 (IKFMLIAGTMAVLGHCYSIFL), 109-129 (VFLAVYPWSGLVFFGVWLFIV), and 134-154 (YVSLASMIGLIFASIFVFFAG).

It belongs to the PlsY family. In terms of assembly, probably interacts with PlsX.

The protein resides in the cell inner membrane. It carries out the reaction an acyl phosphate + sn-glycerol 3-phosphate = a 1-acyl-sn-glycero-3-phosphate + phosphate. The protein operates within lipid metabolism; phospholipid metabolism. Catalyzes the transfer of an acyl group from acyl-phosphate (acyl-PO(4)) to glycerol-3-phosphate (G3P) to form lysophosphatidic acid (LPA). This enzyme utilizes acyl-phosphate as fatty acyl donor, but not acyl-CoA or acyl-ACP. The polypeptide is Glycerol-3-phosphate acyltransferase (Thermosipho melanesiensis (strain DSM 12029 / CIP 104789 / BI429)).